The chain runs to 476 residues: Aspartyl/glutamyl-tRNA(Asn/Gln) amidotransferase subunit B (476 aa).

This sequence belongs to the GatB/GatE family. GatB subfamily. Heterotrimer of A, B and C subunits.

It catalyses the reaction L-glutamyl-tRNA(Gln) + L-glutamine + ATP + H2O = L-glutaminyl-tRNA(Gln) + L-glutamate + ADP + phosphate + H(+). It carries out the reaction L-aspartyl-tRNA(Asn) + L-glutamine + ATP + H2O = L-asparaginyl-tRNA(Asn) + L-glutamate + ADP + phosphate + 2 H(+). Its function is as follows. Allows the formation of correctly charged Asn-tRNA(Asn) or Gln-tRNA(Gln) through the transamidation of misacylated Asp-tRNA(Asn) or Glu-tRNA(Gln) in organisms which lack either or both of asparaginyl-tRNA or glutaminyl-tRNA synthetases. The reaction takes place in the presence of glutamine and ATP through an activated phospho-Asp-tRNA(Asn) or phospho-Glu-tRNA(Gln). The sequence is that of Aspartyl/glutamyl-tRNA(Asn/Gln) amidotransferase subunit B from Lactobacillus helveticus (strain DPC 4571).